The primary structure comprises 66 residues: Alpha-like toxin Bom3 (66 aa).

The LCN-type CS-alpha/beta domain occupies 2-66 (RDGYIAQPEN…PIVVGGEKCH (65 aa)). 4 disulfides stabilise this stretch: C12–C65, C16–C37, C23–C47, and C27–C49.

The protein belongs to the long (4 C-C) scorpion toxin superfamily. Sodium channel inhibitor family. Alpha subfamily. As to expression, expressed by the venom gland.

The protein resides in the secreted. Alpha toxins bind voltage-independently at site-3 of sodium channels (Nav) and inhibit the inactivation of the activated channels, thereby blocking neuronal transmission. As it competes neither with the classical alpha-toxin AaH2 nor the beta-toxin Css2, this toxin is an alpha-like toxin. The polypeptide is Alpha-like toxin Bom3 (Buthus occitanus mardochei (Moroccan scorpion)).